The primary structure comprises 359 residues: Peptide chain release factor 1 (359 aa).

Glutamine 236 is subject to N5-methylglutamine.

This sequence belongs to the prokaryotic/mitochondrial release factor family. Post-translationally, methylated by PrmC. Methylation increases the termination efficiency of RF1.

The protein localises to the cytoplasm. Peptide chain release factor 1 directs the termination of translation in response to the peptide chain termination codons UAG and UAA. This chain is Peptide chain release factor 1 (prfA), found in Mycoplasma pneumoniae (strain ATCC 29342 / M129 / Subtype 1) (Mycoplasmoides pneumoniae).